We begin with the raw amino-acid sequence, 77 residues long: MSDVAEKVKKIIVDQLGVSADEVKPEASFVEDLGADSLDLTELIMAMEEEFEVEIADEDAQKILKVQDAIAYIEEKK.

One can recognise a Carrier domain in the interval 2-77 (SDVAEKVKKI…DAIAYIEEKK (76 aa)). O-(pantetheine 4'-phosphoryl)serine is present on serine 37.

It belongs to the acyl carrier protein (ACP) family. Post-translationally, 4'-phosphopantetheine is transferred from CoA to a specific serine of apo-ACP by AcpS. This modification is essential for activity because fatty acids are bound in thioester linkage to the sulfhydryl of the prosthetic group.

The protein resides in the cytoplasm. Its pathway is lipid metabolism; fatty acid biosynthesis. Carrier of the growing fatty acid chain in fatty acid biosynthesis. The sequence is that of Acyl carrier protein from Desulfovibrio desulfuricans (strain ATCC 27774 / DSM 6949 / MB).